We begin with the raw amino-acid sequence, 647 residues long: Threonine--tRNA ligase (647 aa).

The TGS domain occupies 1-61 (MIKITFPDGA…EEDGSIEIVT (61 aa)). The interval 240–538 (DHRKLGKELD…LIETYKGAFP (299 aa)) is catalytic. Zn(2+) is bound by residues Cys334, His385, and His515.

Belongs to the class-II aminoacyl-tRNA synthetase family. Homodimer. It depends on Zn(2+) as a cofactor.

Its subcellular location is the cytoplasm. It carries out the reaction tRNA(Thr) + L-threonine + ATP = L-threonyl-tRNA(Thr) + AMP + diphosphate + H(+). Functionally, catalyzes the attachment of threonine to tRNA(Thr) in a two-step reaction: L-threonine is first activated by ATP to form Thr-AMP and then transferred to the acceptor end of tRNA(Thr). Also edits incorrectly charged L-seryl-tRNA(Thr). The sequence is that of Threonine--tRNA ligase from Streptococcus agalactiae serotype V (strain ATCC BAA-611 / 2603 V/R).